The sequence spans 406 residues: Argininosuccinate synthase (406 aa).

ATP contacts are provided by residues 12-20 (AYSGGLDTS) and Ala39. L-citrulline is bound by residues Tyr90 and Ser95. ATP is bound at residue Gly120. The L-aspartate site is built by Thr122, Asn126, and Asp127. Residue Asn126 participates in L-citrulline binding. L-citrulline contacts are provided by Arg130, Ser179, Ser188, Glu264, and Tyr276.

The protein belongs to the argininosuccinate synthase family. Type 1 subfamily. As to quaternary structure, homotetramer.

Its subcellular location is the cytoplasm. It catalyses the reaction L-citrulline + L-aspartate + ATP = 2-(N(omega)-L-arginino)succinate + AMP + diphosphate + H(+). It functions in the pathway amino-acid biosynthesis; L-arginine biosynthesis; L-arginine from L-ornithine and carbamoyl phosphate: step 2/3. This Geotalea uraniireducens (strain Rf4) (Geobacter uraniireducens) protein is Argininosuccinate synthase.